Consider the following 353-residue polypeptide: Glutamate 5-kinase (353 aa).

Lysine 8 lines the ATP pocket. Substrate-binding residues include serine 47, aspartate 134, and asparagine 146. 198–204 lines the ATP pocket; the sequence is TGGIRSK. One can recognise a PUA domain in the interval 262–339; the sequence is AGKIYVNKGA…SDLKKILGYE (78 aa).

This sequence belongs to the glutamate 5-kinase family.

Its subcellular location is the cytoplasm. The catalysed reaction is L-glutamate + ATP = L-glutamyl 5-phosphate + ADP. Its pathway is amino-acid biosynthesis; L-proline biosynthesis; L-glutamate 5-semialdehyde from L-glutamate: step 1/2. In terms of biological role, catalyzes the transfer of a phosphate group to glutamate to form L-glutamate 5-phosphate. In Thermotoga maritima (strain ATCC 43589 / DSM 3109 / JCM 10099 / NBRC 100826 / MSB8), this protein is Glutamate 5-kinase.